The chain runs to 119 residues: Urotensin-2B (119 aa).

Residues 1 to 28 (MNKILSSTVCFGLLTLLSVLSFLQSVHG) form the signal peptide. The propeptide occupies 29–109 (RPYLTQGNEI…VDGLFSSHPS (81 aa)). Residues cysteine 113 and cysteine 118 are joined by a disulfide bond.

It belongs to the urotensin-2 family.

Its subcellular location is the secreted. In terms of biological role, potent vasoconstrictor. The protein is Urotensin-2B (UTS2B) of Homo sapiens (Human).